A 171-amino-acid chain; its full sequence is Large ribosomal subunit protein uL10 (171 aa).

Belongs to the universal ribosomal protein uL10 family. In terms of assembly, part of the ribosomal stalk of the 50S ribosomal subunit. The N-terminus interacts with L11 and the large rRNA to form the base of the stalk. The C-terminus forms an elongated spine to which L12 dimers bind in a sequential fashion forming a multimeric L10(L12)X complex.

Its function is as follows. Forms part of the ribosomal stalk, playing a central role in the interaction of the ribosome with GTP-bound translation factors. This is Large ribosomal subunit protein uL10 from Methylocella silvestris (strain DSM 15510 / CIP 108128 / LMG 27833 / NCIMB 13906 / BL2).